The primary structure comprises 100 residues: uncharacterized protein (100 aa).

Residues 1–26 (MKRLLVSLRVWMVFLMNWVTPDRKTA) form the signal peptide.

This is an uncharacterized protein from Bacillus subtilis (strain 168).